A 54-amino-acid polypeptide reads, in one-letter code: Large ribosomal subunit protein bL32c (54 aa).

This sequence belongs to the bacterial ribosomal protein bL32 family.

It is found in the plastid. It localises to the chloroplast. In Helianthus annuus (Common sunflower), this protein is Large ribosomal subunit protein bL32c.